We begin with the raw amino-acid sequence, 116 residues long: Putative antiporter subunit mnhC2 (116 aa).

A run of 3 helical transmembrane segments spans residues 3–23, 28–48, and 72–92; these read LILL…ILSL, IVIG…SMGH, and AIVL…LVLV.

This sequence belongs to the CPA3 antiporters (TC 2.A.63) subunit C family. In terms of assembly, may form a heterooligomeric complex that consists of seven subunits: mnhA2, mnhB2, mnhC2, mnhD2, mnhE2, mnhF2 and mnhG2.

It localises to the cell membrane. This chain is Putative antiporter subunit mnhC2 (mnhC2), found in Staphylococcus haemolyticus (strain JCSC1435).